Consider the following 257-residue polypeptide: Leucine-rich repeat-containing protein 3 (257 aa).

The N-terminal stretch at 1–32 (MGPRGRQSPSATLAPSQGSCFFILFCLRLGAS) is a signal peptide. Positions 33-64 (CPQACQCPDHAGAVAVHCSSRGLQEIPRDIPA) constitute an LRRNT domain. LRR repeat units follow at residues 65 to 86 (DTVL…AFQH), 89 to 110 (QLRE…AFSG), and 114 to 135 (GLRL…ALGK). Positions 145 to 198 (NPLHCECALQEALWELKLDPDSVDEIACHTSAQEQFVGKPLIQVLDSGASFCST) constitute an LRRCT domain. The chain crosses the membrane as a helical span at residues 205–225 (VAMLVTMFGWFTMVIAYVVYY).

Belongs to the LRRC3 family.

The protein localises to the membrane. The sequence is that of Leucine-rich repeat-containing protein 3 (Lrrc3) from Mus musculus (Mouse).